Consider the following 469-residue polypeptide: 3-isopropylmalate dehydratase large subunit (469 aa).

Cys-349, Cys-409, and Cys-412 together coordinate [4Fe-4S] cluster. The segment at 424–443 is disordered; the sequence is QISASSSNRNFKGRQGSPSG.

It belongs to the aconitase/IPM isomerase family. LeuC type 1 subfamily. Heterodimer of LeuC and LeuD. The cofactor is [4Fe-4S] cluster.

The catalysed reaction is (2R,3S)-3-isopropylmalate = (2S)-2-isopropylmalate. It participates in amino-acid biosynthesis; L-leucine biosynthesis; L-leucine from 3-methyl-2-oxobutanoate: step 2/4. Functionally, catalyzes the isomerization between 2-isopropylmalate and 3-isopropylmalate, via the formation of 2-isopropylmaleate. The sequence is that of 3-isopropylmalate dehydratase large subunit from Thermosynechococcus vestitus (strain NIES-2133 / IAM M-273 / BP-1).